A 479-amino-acid chain; its full sequence is Adenosylhomocysteinase (479 aa).

Substrate is bound by residues T66, D142, and E203. T204 to T206 serves as a coordination point for NAD(+). Substrate contacts are provided by K233 and D237. NAD(+) is bound by residues N238, G267–G272, E290, N325, I346–H348, and N394.

This sequence belongs to the adenosylhomocysteinase family. NAD(+) serves as cofactor.

The protein localises to the cytoplasm. It carries out the reaction S-adenosyl-L-homocysteine + H2O = L-homocysteine + adenosine. Its pathway is amino-acid biosynthesis; L-homocysteine biosynthesis; L-homocysteine from S-adenosyl-L-homocysteine: step 1/1. In terms of biological role, may play a key role in the regulation of the intracellular concentration of adenosylhomocysteine. The chain is Adenosylhomocysteinase from Nitratidesulfovibrio vulgaris (strain ATCC 29579 / DSM 644 / CCUG 34227 / NCIMB 8303 / VKM B-1760 / Hildenborough) (Desulfovibrio vulgaris).